We begin with the raw amino-acid sequence, 171 residues long: Ribosome maturation factor RimM (171 aa).

The PRC barrel domain occupies 98 to 170; that stretch reads EGEFYLHQII…AVQVSVPEGL (73 aa).

Belongs to the RimM family. In terms of assembly, binds ribosomal protein uS19.

It localises to the cytoplasm. Its function is as follows. An accessory protein needed during the final step in the assembly of 30S ribosomal subunit, possibly for assembly of the head region. Essential for efficient processing of 16S rRNA. May be needed both before and after RbfA during the maturation of 16S rRNA. It has affinity for free ribosomal 30S subunits but not for 70S ribosomes. The protein is Ribosome maturation factor RimM of Pediococcus pentosaceus (strain ATCC 25745 / CCUG 21536 / LMG 10740 / 183-1w).